The chain runs to 429 residues: Small ribosomal subunit protein mS47 (429 aa).

Residues Glu-141, Gly-166, Glu-189, and Asp-197 each coordinate substrate.

It belongs to the enoyl-CoA hydratase/isomerase family. Mitochondrion-specific ribosomal protein mS47 subfamily. Component of the mitochondrial small ribosomal subunit (mt-SSU). Mature yeast 74S mitochondrial ribosomes consist of a small (37S) and a large (54S) subunit. The 37S small subunit contains a 15S ribosomal RNA (15S mt-rRNA) and at least 32 different proteins. The 54S large subunit contains a 21S rRNA (21S mt-rRNA) and at least 45 different proteins. mS47/snr1 forms a protuberance of the yeast mitoribosome and retains a solvent-exposed cavity likely capable of accommodating a substrate, in accordance with it being an active enzyme as well as an integral constituent of the mitoribosome.

Its subcellular location is the mitochondrion. It catalyses the reaction 3-hydroxy-2-methylpropanoyl-CoA + H2O = 3-hydroxy-2-methylpropanoate + CoA + H(+). It functions in the pathway amino-acid degradation; L-valine degradation. Its function is as follows. Component of the mitochondrial ribosome (mitoribosome), a dedicated translation machinery responsible for the synthesis of mitochondrial genome-encoded proteins, including at least some of the essential transmembrane subunits of the mitochondrial respiratory chain. The mitoribosomes are attached to the mitochondrial inner membrane and translation products are cotranslationally integrated into the membrane. mS47/snr1 has enzymatic activity in vitro, and is able to catalyze the specific hydrolysis of 3-hydroxyisobutyryl-CoA (HIBYL-CoA). However, because the turnover rate of mS47/snr1 is only a fraction of that of the homologous mammalian enzyme, the physiological function of this activity remains unclear. Has an indirect role in endocytic membrane trafficking. The protein is Small ribosomal subunit protein mS47 (snr1) of Schizosaccharomyces pombe (strain 972 / ATCC 24843) (Fission yeast).